Consider the following 309-residue polypeptide: NAD kinase (309 aa).

The active-site Proton acceptor is Asp-89. NAD(+)-binding positions include Asp-89–Gly-90, Asn-163–Glu-164, Arg-191, Asp-193, and Thr-204–Ser-209.

This sequence belongs to the NAD kinase family. A divalent metal cation is required as a cofactor.

The protein localises to the cytoplasm. The enzyme catalyses NAD(+) + ATP = ADP + NADP(+) + H(+). In terms of biological role, involved in the regulation of the intracellular balance of NAD and NADP, and is a key enzyme in the biosynthesis of NADP. Catalyzes specifically the phosphorylation on 2'-hydroxyl of the adenosine moiety of NAD to yield NADP. The protein is NAD kinase of Shewanella halifaxensis (strain HAW-EB4).